A 378-amino-acid chain; its full sequence is Putative odorant receptor 71a (378 aa).

Topologically, residues M1 to Q37 are cytoplasmic. A helical membrane pass occupies residues A38–I58. At K59–T66 the chain is on the extracellular side. Residues A67–W87 form a helical membrane-spanning segment. Over K88–V127 the chain is Cytoplasmic. The chain crosses the membrane as a helical span at residues F128 to F148. Residues D149–Q166 lie on the Extracellular side of the membrane. A helical transmembrane segment spans residues P167 to C187. At N188 to Q255 the chain is on the cytoplasmic side. The chain crosses the membrane as a helical span at residues I256–L276. At Q277–P280 the chain is on the extracellular side. The helical transmembrane segment at G281–I301 threads the bilayer. The Cytoplasmic portion of the chain corresponds to Y302–P343. A helical membrane pass occupies residues V344–N364. Over Q365–Q378 the chain is Extracellular.

It belongs to the insect chemoreceptor superfamily. Heteromeric odorant receptor channel (TC 1.A.69) family. Or2a subfamily. Interacts with Orco. Complexes exist early in the endomembrane system in olfactory sensory neurons (OSNs), coupling these complexes to the conserved ciliary trafficking pathway. Expressed in olfactory sensory neurons in the maxillary palp.

It is found in the cell membrane. Odorant receptor which mediates acceptance or avoidance behavior, depending on its substrates. The odorant receptor repertoire encodes a large collection of odor stimuli that vary widely in identity, intensity, and duration. May form a complex with Orco to form odorant-sensing units, providing sensitive and prolonged odorant signaling and calcium permeability. The protein is Putative odorant receptor 71a (Or71a) of Drosophila melanogaster (Fruit fly).